Consider the following 182-residue polypeptide: Troponin I, fast skeletal muscle (182 aa).

N-acetylglycine is present on glycine 2. Residues 2-48 (GDEEKRNRAITARRQHLKSVMLQIAATELEKEEGRREAEKQNYLAEH) are involved in binding TNC. Residue threonine 12 is modified to Phosphothreonine; by PHK. The tract at residues 97 to 117 (NQKLFDLRGKFKRPPLRRVRM) is involved in binding TNC and actin. The residue at position 118 (serine 118) is a Phosphoserine; by PKA.

This sequence belongs to the troponin I family. As to quaternary structure, binds to actin and tropomyosin.

Its function is as follows. Troponin I is the inhibitory subunit of troponin, the thin filament regulatory complex which confers calcium-sensitivity to striated muscle actomyosin ATPase activity. The polypeptide is Troponin I, fast skeletal muscle (TNNI2) (Oryctolagus cuniculus (Rabbit)).